Here is a 380-residue protein sequence, read N- to C-terminus: Erythronate-4-phosphate dehydrogenase (380 aa).

S45 and T66 together coordinate substrate. Residues D146, T174, 205–207 (ASR), and D231 contribute to the NAD(+) site. The active site involves R207. The active site involves E236. H253 (proton donor) is an active-site residue. G256 contributes to the NAD(+) binding site. Y257 serves as a coordination point for substrate.

It belongs to the D-isomer specific 2-hydroxyacid dehydrogenase family. PdxB subfamily. In terms of assembly, homodimer.

The protein localises to the cytoplasm. The catalysed reaction is 4-phospho-D-erythronate + NAD(+) = (R)-3-hydroxy-2-oxo-4-phosphooxybutanoate + NADH + H(+). The protein operates within cofactor biosynthesis; pyridoxine 5'-phosphate biosynthesis; pyridoxine 5'-phosphate from D-erythrose 4-phosphate: step 2/5. Catalyzes the oxidation of erythronate-4-phosphate to 3-hydroxy-2-oxo-4-phosphonooxybutanoate. The polypeptide is Erythronate-4-phosphate dehydrogenase (Pseudomonas putida (strain ATCC 700007 / DSM 6899 / JCM 31910 / BCRC 17059 / LMG 24140 / F1)).